We begin with the raw amino-acid sequence, 88 residues long: Large ribosomal subunit protein bL27 (88 aa).

A disordered region spans residues 1–24 (MAHKKGTGSTRNGRDSNAKRLGVK).

This sequence belongs to the bacterial ribosomal protein bL27 family.

This chain is Large ribosomal subunit protein bL27, found in Synechococcus sp. (strain CC9605).